A 302-amino-acid polypeptide reads, in one-letter code: Cell division protein FtsQ (302 aa).

The Cytoplasmic portion of the chain corresponds to 1-43 (MRPVDKKPVDRKIERETRYLRRDPAPSRWSYRYQRLMLTPAFR). A helical transmembrane segment spans residues 44–64 (AGVRLGTPVIIIALAVAVVFG). Topologically, residues 65 to 302 (RADSRDWIMG…SMPGRSAGRG (238 aa)) are periplasmic. In terms of domain architecture, POTRA spans 89 to 156 (FMVGSFAITG…GVLQIVIEER (68 aa)).

Belongs to the FtsQ/DivIB family. FtsQ subfamily.

It localises to the cell inner membrane. Functionally, essential cell division protein. This Ketogulonicigenium vulgare (strain Y25) protein is Cell division protein FtsQ.